The primary structure comprises 293 residues: Acetyl-coenzyme A carboxylase carboxyl transferase subunit beta (293 aa).

The CoA carboxyltransferase N-terminal domain maps to 29 to 293 (LWSKCPECGQ…GCKPMELTSA (265 aa)). Positions 33, 36, 52, and 55 each coordinate Zn(2+). A C4-type zinc finger spans residues 33–55 (CPECGQVVYLKDLKLNASVCANC).

This sequence belongs to the AccD/PCCB family. Acetyl-CoA carboxylase is a heterohexamer composed of biotin carboxyl carrier protein (AccB), biotin carboxylase (AccC) and two subunits each of ACCase subunit alpha (AccA) and ACCase subunit beta (AccD). Zn(2+) serves as cofactor.

It localises to the cytoplasm. The enzyme catalyses N(6)-carboxybiotinyl-L-lysyl-[protein] + acetyl-CoA = N(6)-biotinyl-L-lysyl-[protein] + malonyl-CoA. Its pathway is lipid metabolism; malonyl-CoA biosynthesis; malonyl-CoA from acetyl-CoA: step 1/1. Functionally, component of the acetyl coenzyme A carboxylase (ACC) complex. Biotin carboxylase (BC) catalyzes the carboxylation of biotin on its carrier protein (BCCP) and then the CO(2) group is transferred by the transcarboxylase to acetyl-CoA to form malonyl-CoA. This Synechococcus sp. (strain CC9605) protein is Acetyl-coenzyme A carboxylase carboxyl transferase subunit beta.